A 228-amino-acid polypeptide reads, in one-letter code: Putative ATP-dependent Clp protease proteolytic subunit-like (228 aa).

It belongs to the peptidase S14 family.

In terms of biological role, has lost the two conserved residues (Ser and His) proposed to be part of the active site. Therefore it could be inactive. In Synechococcus elongatus (strain ATCC 33912 / PCC 7942 / FACHB-805) (Anacystis nidulans R2), this protein is Putative ATP-dependent Clp protease proteolytic subunit-like (clpR).